We begin with the raw amino-acid sequence, 1008 residues long: G protein-regulated inducer of neurite outgrowth 1 (1008 aa).

The interval 1–859 (MDTAEDPAWL…SPPSRRDAGL (859 aa)) is disordered. Thr-60 is subject to Phosphothreonine. 2 positions are modified to phosphoserine: Ser-64 and Ser-75. A compositionally biased stretch (polar residues) spans 117–127 (ISGTPEATTSG). Composition is skewed to basic and acidic residues over residues 137–159 (TEPKSSDDRNPMFLEKMDFKSSK), 167–178 (GKEDPGSSRKAD), 230–269 (PRKEDPGSLRKVDPVSSDKVDPVFPRKEEPRYSGKEHPVS), and 279–291 (EKVDLVLSGKRDP). Position 237 is a phosphoserine (Ser-237). 2 stretches are compositionally biased toward polar residues: residues 326-336 (SGKNGPVSSGT) and 391-406 (HTDTTASAKTDLTSLK). Phosphoserine occurs at positions 436 and 452. Over residues 454-466 (GKEDPVSSRREDP) the composition is skewed to basic and acidic residues. A compositionally biased stretch (polar residues) spans 481 to 491 (PESSGKTNPVS). The span at 549–559 (GKEDPVSKGKA) shows a compositional bias: basic and acidic residues. Ser-615 carries the post-translational modification Phosphoserine. Positions 643-656 (PGQEGAAAPGEAGA) are enriched in low complexity. The span at 659–679 (LKKETPQASEKVDPGSCRKAE) shows a compositional bias: basic and acidic residues. The residue at position 737 (Ser-737) is a Phosphoserine. Residues 742-752 (RGSEGRVEPKA) are compositionally biased toward basic and acidic residues. Over residues 755–764 (VSSTEASSLG) the composition is skewed to polar residues. Ser-799 is modified (phosphoserine). Low complexity predominate over residues 838–847 (SAFSFQAAPR). Thr-877 is modified (phosphothreonine). Ser-895 and Ser-914 each carry phosphoserine. Residues 899 to 1008 (AAVAPPEPAE…CCSRAGPTAE (110 aa)) are interaction with GNAO1. Positions 943–986 (ERQIEEHGRQGAPAPPPAARAGPGRSGSVRTAPPDGAAKRPPGL) are disordered. Residue Ser-993 is modified to Phosphoserine. Residues Cys-999 and Cys-1000 are each lipidated (S-palmitoyl cysteine).

Interacts with activated forms of GNAI1, GNAO1 and GNAZ. In terms of processing, palmitoylation on Cys-999 and/or Cys-1000 is required for membrane targeting. In terms of tissue distribution, widely expressed in the central nervous system, with highest levels in spinal cord.

Its subcellular location is the cell membrane. It localises to the cell projection. The protein resides in the growth cone. Functionally, may be involved in neurite outgrowth. The polypeptide is G protein-regulated inducer of neurite outgrowth 1 (GPRIN1) (Homo sapiens (Human)).